Consider the following 217-residue polypeptide: Large ribosomal subunit protein uL1 (217 aa).

Belongs to the universal ribosomal protein uL1 family. In terms of assembly, part of the 50S ribosomal subunit.

Its function is as follows. Binds directly to 23S rRNA. Probably involved in E site tRNA release. In terms of biological role, protein L1 is also a translational repressor protein, it controls the translation of its operon by binding to its mRNA. The sequence is that of Large ribosomal subunit protein uL1 from Aeropyrum pernix (strain ATCC 700893 / DSM 11879 / JCM 9820 / NBRC 100138 / K1).